Reading from the N-terminus, the 175-residue chain is MGARRLRVRSQRSRDSSVPTQCNQTECFDPLVRNCVSCELFHTPDTGHTSSLEPGTALQPQEGSALRPDVALLVGAPALLGLILALTLVGLVSLVSWRWRQQLRTASPDTSEGVQQESLENVFVPSSETPHASAPTWPPLKEDADSALPRHSVPVPATELGSTELVTTKTAGPEQ.

At 1-71 (MGARRLRVRS…EGSALRPDVA (71 aa)) the chain is on the extracellular side. The TNFR-Cys; truncated repeat unit spans residues 21–38 (QCNQTECFDPLVRNCVSC). 2 disulfides stabilise this stretch: Cys-22–Cys-35 and Cys-27–Cys-38. Asn-23 carries an N-linked (GlcNAc...) asparagine glycan. The essential for TNFSF13B/TALL1/BAFF/BLyS binding stretch occupies residues 29–34 (DPLVRN). A helical; Signal-anchor for type III membrane protein membrane pass occupies residues 72–92 (LLVGAPALLGLILALTLVGLV). At 93–175 (SLVSWRWRQQ…VTTKTAGPEQ (83 aa)) the chain is on the cytoplasmic side. Positions 124 to 175 (VPSSETPHASAPTWPPLKEDADSALPRHSVPVPATELGSTELVTTKTAGPEQ) are disordered. Residues 160–175 (LGSTELVTTKTAGPEQ) are compositionally biased toward polar residues.

In terms of tissue distribution, highly expressed in spleen and testis; detected at lower levels in lung and thymus.

It localises to the membrane. Its function is as follows. B-cell receptor specific for TNFSF13B/TALL1/BAFF/BLyS. Promotes the survival of mature B-cells and the B-cell response. The chain is Tumor necrosis factor receptor superfamily member 13C (Tnfrsf13c) from Mus musculus (Mouse).